The primary structure comprises 232 residues: Response regulator MprA (232 aa).

Positions 4-118 (RILVVDDDRA…ELLARMRALL (115 aa)) constitute a Response regulatory domain. Residue Asp-48 is modified to 4-aspartylphosphate. The ompR/PhoB-type DNA-binding region spans 131–229 (SVAMTFSDLS…VRGVGYVLRE (99 aa)).

In terms of processing, phosphorylated and dephosphorylated by MprB.

The protein resides in the cytoplasm. Functionally, member of the two-component regulatory system MprB/MprA which contributes to maintaining a balance among several systems involved in stress resistance and is required for establishment and maintenance of persistent infection in the host. Functions as a transcriptional regulator that recognizes a 19-bp nucleotide motif comprizing two loosely conserved 8-bp direct DNA-binding motif repeats separated by a 3-bp spacer region. In Mycobacterium ulcerans (strain Agy99), this protein is Response regulator MprA (mprA).